Here is a 71-residue protein sequence, read N- to C-terminus: ATP synthase subunit c (71 aa).

A run of 2 helical transmembrane segments spans residues 4 to 24 and 48 to 68; these read AVIG…GIGI and IIGA…AFMI.

The protein belongs to the ATPase C chain family. F-type ATPases have 2 components, F(1) - the catalytic core - and F(0) - the membrane proton channel. F(1) has five subunits: alpha(3), beta(3), gamma(1), delta(1), epsilon(1). F(0) has three main subunits: a(1), b(2) and c(10-14). The alpha and beta chains form an alternating ring which encloses part of the gamma chain. F(1) is attached to F(0) by a central stalk formed by the gamma and epsilon chains, while a peripheral stalk is formed by the delta and b chains.

The protein localises to the cell membrane. Its function is as follows. F(1)F(0) ATP synthase produces ATP from ADP in the presence of a proton or sodium gradient. F-type ATPases consist of two structural domains, F(1) containing the extramembraneous catalytic core and F(0) containing the membrane proton channel, linked together by a central stalk and a peripheral stalk. During catalysis, ATP synthesis in the catalytic domain of F(1) is coupled via a rotary mechanism of the central stalk subunits to proton translocation. Key component of the F(0) channel; it plays a direct role in translocation across the membrane. A homomeric c-ring of between 10-14 subunits forms the central stalk rotor element with the F(1) delta and epsilon subunits. This is ATP synthase subunit c from Clostridium botulinum (strain Alaska E43 / Type E3).